Here is a 269-residue protein sequence, read N- to C-terminus: UPF0162 protein BUsg_167 (269 aa).

Belongs to the UPF0162 family.

The sequence is that of UPF0162 protein BUsg_167 from Buchnera aphidicola subsp. Schizaphis graminum (strain Sg).